Here is a 668-residue protein sequence, read N- to C-terminus: Macrolide export ATP-binding/permease protein MacB 1/2 (668 aa).

The 239-residue stretch at 9–247 (IRLRGVGREY…PGPGPAQAPQ (239 aa)) folds into the ABC transporter domain. 45–52 (GASGSGKS) lines the ATP pocket. Residues 230–257 (RTGAPAADPGPGPAQAPQPAPQPAPVQA) are disordered. A compositionally biased stretch (pro residues) spans 237–255 (DPGPGPAQAPQPAPQPAPV). 4 helical membrane passes run 294-314 (FLTMLGIIIGIASVVSVVALG), 541-561 (LALLIAAIAVISLVVGGIGVM), 598-618 (LVCVIGGIAGILAALGFGLAF), and 634-654 (MLAALASACAIGLAFGYLPAV).

The protein belongs to the ABC transporter superfamily. Macrolide exporter (TC 3.A.1.122) family. In terms of assembly, homodimer.

Its subcellular location is the cell inner membrane. In terms of biological role, non-canonical ABC transporter that contains transmembrane domains (TMD), which form a pore in the inner membrane, and an ATP-binding domain (NBD), which is responsible for energy generation. Confers resistance against macrolides. The polypeptide is Macrolide export ATP-binding/permease protein MacB 1/2 (Paracoccus denitrificans (strain Pd 1222)).